The following is a 413-amino-acid chain: Arginine deiminase (413 aa).

Cys403 acts as the Amidino-cysteine intermediate in catalysis.

This sequence belongs to the arginine deiminase family.

It is found in the cytoplasm. The catalysed reaction is L-arginine + H2O = L-citrulline + NH4(+). Its pathway is amino-acid degradation; L-arginine degradation via ADI pathway; carbamoyl phosphate from L-arginine: step 1/2. The protein is Arginine deiminase of Clostridium perfringens (strain SM101 / Type A).